A 370-amino-acid chain; its full sequence is Aminomethyltransferase (370 aa).

This sequence belongs to the GcvT family. The glycine cleavage system is composed of four proteins: P, T, L and H.

It catalyses the reaction N(6)-[(R)-S(8)-aminomethyldihydrolipoyl]-L-lysyl-[protein] + (6S)-5,6,7,8-tetrahydrofolate = N(6)-[(R)-dihydrolipoyl]-L-lysyl-[protein] + (6R)-5,10-methylene-5,6,7,8-tetrahydrofolate + NH4(+). In terms of biological role, the glycine cleavage system catalyzes the degradation of glycine. This Prochlorococcus marinus (strain MIT 9215) protein is Aminomethyltransferase.